The sequence spans 396 residues: S-adenosylmethionine synthase (396 aa).

Residue His14 participates in ATP binding. Asp16 lines the Mg(2+) pocket. Residue Glu42 participates in K(+) binding. Residues Glu55 and Gln98 each coordinate L-methionine. Positions 98–108 (QSPDIAQGVHG) are flexible loop. Residues 167-169 (DAK), 234-235 (RF), Asp243, 249-250 (RK), Ser266, and Lys270 each bind ATP. Position 243 (Asp243) interacts with L-methionine. Lys274 lines the L-methionine pocket.

The protein belongs to the AdoMet synthase family. Homotetramer; dimer of dimers. Mg(2+) is required as a cofactor. Requires K(+) as cofactor.

It localises to the cytoplasm. It catalyses the reaction L-methionine + ATP + H2O = S-adenosyl-L-methionine + phosphate + diphosphate. The protein operates within amino-acid biosynthesis; S-adenosyl-L-methionine biosynthesis; S-adenosyl-L-methionine from L-methionine: step 1/1. Functionally, catalyzes the formation of S-adenosylmethionine (AdoMet) from methionine and ATP. The overall synthetic reaction is composed of two sequential steps, AdoMet formation and the subsequent tripolyphosphate hydrolysis which occurs prior to release of AdoMet from the enzyme. The protein is S-adenosylmethionine synthase of Treponema pallidum (strain Nichols).